The chain runs to 661 residues: Acetyl-coenzyme A synthetase (661 aa).

CoA is bound by residues 197-200 (RGGK) and T320. ATP is bound by residues 396–398 (GEP), 420–425 (DTWWQT), D511, and R526. A CoA-binding site is contributed by S534. Residue R537 participates in ATP binding. The Mg(2+) site is built by V548 and V553. The residue at position 620 (K620) is an N6-acetyllysine.

The protein belongs to the ATP-dependent AMP-binding enzyme family. The cofactor is Mg(2+). Acetylated. Deacetylation by the SIR2-homolog deacetylase activates the enzyme.

It catalyses the reaction acetate + ATP + CoA = acetyl-CoA + AMP + diphosphate. In terms of biological role, catalyzes the conversion of acetate into acetyl-CoA (AcCoA), an essential intermediate at the junction of anabolic and catabolic pathways. AcsA undergoes a two-step reaction. In the first half reaction, AcsA combines acetate with ATP to form acetyl-adenylate (AcAMP) intermediate. In the second half reaction, it can then transfer the acetyl group from AcAMP to the sulfhydryl group of CoA, forming the product AcCoA. This chain is Acetyl-coenzyme A synthetase, found in Leptospira interrogans serogroup Icterohaemorrhagiae serovar copenhageni (strain Fiocruz L1-130).